Consider the following 1042-residue polypeptide: Signal-induced proliferation-associated protein 1 (1042 aa).

2 disordered regions span residues Met1–Arg87 and Ser132–Ala153. Thr64 is modified (phosphothreonine). The residue at position 67 (Ser67) is a Phosphoserine. A compositionally biased stretch (polar residues) spans Gly134–Leu146. Phosphoserine is present on residues Ser182, Ser304, and Ser314. The Rap-GAP domain occupies Leu321–Leu539. One can recognise a PDZ domain in the interval Glu687 to Glu763. Phosphoserine occurs at positions 817, 839, and 912. A disordered region spans residues Glu830–Leu903. The span at Leu832–Ser845 shows a compositional bias: low complexity. The interval Leu946–His980 is disordered. Positions Gly957–Ala967 are enriched in basic and acidic residues. Positions Gly972–Leu1034 form a coiled coil.

In terms of assembly, interacts with RRP1B; the interaction leads to inhibition of SIPA1 GTPase activity. In terms of tissue distribution, expressed in fetal as well as in adult tissues. Expressed abundantly in the lymphoid tissues such as thymus, spleen and peripheral blood lymphocytes and also shows a significant expression in the spinal cord.

Its subcellular location is the nucleus. The protein localises to the cytoplasm. The protein resides in the perinuclear region. It is found in the endomembrane system. In terms of biological role, GTPase activator for the nuclear Ras-related regulatory proteins Rap1 and Rap2 in vitro, converting them to the putatively inactive GDP-bound state. Affects cell cycle progression. This chain is Signal-induced proliferation-associated protein 1 (SIPA1), found in Homo sapiens (Human).